We begin with the raw amino-acid sequence, 300 residues long: Acetaldehyde dehydrogenase (300 aa).

10–13 contacts NAD(+); the sequence is SGNI. Catalysis depends on cysteine 129, which acts as the Acyl-thioester intermediate. Residues 160-168 and asparagine 271 contribute to the NAD(+) site; that span reads SAGPGTRKN.

Belongs to the acetaldehyde dehydrogenase family.

The catalysed reaction is acetaldehyde + NAD(+) + CoA = acetyl-CoA + NADH + H(+). The chain is Acetaldehyde dehydrogenase from Alkalilimnicola ehrlichii (strain ATCC BAA-1101 / DSM 17681 / MLHE-1).